Here is a 446-residue protein sequence, read N- to C-terminus: Histidine--tRNA ligase (446 aa).

The protein belongs to the class-II aminoacyl-tRNA synthetase family. In terms of assembly, homodimer.

It localises to the cytoplasm. The enzyme catalyses tRNA(His) + L-histidine + ATP = L-histidyl-tRNA(His) + AMP + diphosphate + H(+). The protein is Histidine--tRNA ligase of Burkholderia cenocepacia (strain HI2424).